A 367-amino-acid polypeptide reads, in one-letter code: Hyaluronidase (367 aa).

Cystine bridges form between cysteine 48/cysteine 337 and cysteine 214/cysteine 226. Asparagine 108 carries an N-linked (GlcNAc...) asparagine glycan. Residue glutamate 138 is the Proton donor of the active site. Residue asparagine 354 is glycosylated (N-linked (GlcNAc...) asparagine).

Belongs to the glycosyl hydrolase 56 family.

The enzyme catalyses Random hydrolysis of (1-&gt;4)-linkages between N-acetyl-beta-D-glucosamine and D-glucuronate residues in hyaluronate.. In terms of biological role, may play a role in reproduction. The chain is Hyaluronidase from Polistes annularis (Paper wasp).